The primary structure comprises 908 residues: Flap endonuclease GEN homolog 1 (908 aa).

Residues 2 to 96 (GVNDLWQILE…SKRNQSRYGS (95 aa)) form an XPG-N domain region. Mg(2+) is bound by residues Asp-30, Glu-75, Glu-134, Glu-136, Asp-155, Asp-157, and Asp-208. The tract at residues 122–208 (ECLGIPWVQA…VGLAILLGCD (87 aa)) is XPG-I domain. Positions 208–384 (DYLPKGVPGV…LLVLLTHYDM (177 aa)) are 5'-3' exonuclease domain. The segment at 390 to 464 (GSRNSNQLQP…VYQKQKLEIK (75 aa)) is chromodomain. Phosphoserine occurs at positions 801 and 802.

This sequence belongs to the XPG/RAD2 endonuclease family. GEN subfamily. As to quaternary structure, largely monomeric, dimerizes on the Holliday junction and the first nick occurs upon dimerization at the junction. Mg(2+) is required as a cofactor.

Its subcellular location is the nucleus. Endonuclease which resolves Holliday junctions (HJs) by the introduction of symmetrically related cuts across the junction point, to produce nicked duplex products in which the nicks can be readily ligated. Four-way DNA intermediates, also known as Holliday junctions, are formed during homologous recombination and DNA repair, and their resolution is necessary for proper chromosome segregation. Cleaves HJs by a nick and counter-nick mechanism involving dual coordinated incisions that lead to the formation of ligatable nicked duplex products. Cleavage of the first strand is rate limiting, while second strand cleavage is rapid. Largely monomeric, dimerizes on the HJ and the first nick occurs upon dimerization at the junction. Efficiently cleaves both single and double HJs contained within large recombination intermediates. Exhibits a weak sequence preference for incision between two G residues that reside in a T-rich region of DNA. Also has endonuclease activity on 5'-flap and replication fork (RF) DNA substrates. In Homo sapiens (Human), this protein is Flap endonuclease GEN homolog 1 (GEN1).